The sequence spans 439 residues: Mitochondrial distribution and morphology protein 12 (439 aa).

The region spanning 1-439 is the SMP-LTD domain; the sequence is MSIDVNWRSA…VYPSFWTFLI (439 aa). Over residues 70–85 the composition is skewed to acidic residues; sequence YEEDDDDHTSDASEEL. 3 disordered regions span residues 70–102, 184–274, and 353–386; these read YEED…ELNE, SGWS…PPRM, and GSEQ…RHGG. Positions 197–212 are enriched in basic and acidic residues; sequence GRSERHAGMKHQRAEP. A compositionally biased stretch (polar residues) spans 215–230; sequence DTSNSTSRPSTANTLP. The span at 231–240 shows a compositional bias: low complexity; it reads SHPSSSSKNS. Basic and acidic residues predominate over residues 247-261; it reads RNDHPSLHAGEHIED.

It belongs to the MDM12 family. As to quaternary structure, component of the ER-mitochondria encounter structure (ERMES) or MDM complex, composed of mmm1, mdm10, mdm12 and mdm34. A mmm1 homodimer associates with one molecule of mdm12 on each side in a pairwise head-to-tail manner, and the SMP-LTD domains of mmm1 and mdm12 generate a continuous hydrophobic tunnel for phospholipid trafficking.

It localises to the mitochondrion outer membrane. It is found in the endoplasmic reticulum membrane. In terms of biological role, component of the ERMES/MDM complex, which serves as a molecular tether to connect the endoplasmic reticulum (ER) and mitochondria. Components of this complex are involved in the control of mitochondrial shape and protein biogenesis, and function in nonvesicular lipid trafficking between the ER and mitochondria. Mdm12 is required for the interaction of the ER-resident membrane protein mmm1 and the outer mitochondrial membrane-resident beta-barrel protein mdm10. The mdm12-mmm1 subcomplex functions in the major beta-barrel assembly pathway that is responsible for biogenesis of all mitochondrial outer membrane beta-barrel proteins, and acts in a late step after the SAM complex. The mdm10-mdm12-mmm1 subcomplex further acts in the TOM40-specific pathway after the action of the mdm12-mmm1 complex. Essential for establishing and maintaining the structure of mitochondria and maintenance of mtDNA nucleoids. The polypeptide is Mitochondrial distribution and morphology protein 12 (Neosartorya fischeri (strain ATCC 1020 / DSM 3700 / CBS 544.65 / FGSC A1164 / JCM 1740 / NRRL 181 / WB 181) (Aspergillus fischerianus)).